Consider the following 337-residue polypeptide: Outer membrane protein U (337 aa).

A signal peptide spans 1–21 (MKKTLIALSVSAAAMATGVNA).

The protein belongs to the Gram-negative porin family. Homotrimer.

It localises to the cell outer membrane. Forms pores that allow passive diffusion of small molecules across the outer membrane. The sequence is that of Outer membrane protein U (ompU) from Vibrio parahaemolyticus serotype O3:K6 (strain RIMD 2210633).